A 156-amino-acid chain; its full sequence is Transcription antitermination protein NusB (156 aa).

The protein belongs to the NusB family.

In terms of biological role, involved in transcription antitermination. Required for transcription of ribosomal RNA (rRNA) genes. Binds specifically to the boxA antiterminator sequence of the ribosomal RNA (rrn) operons. The chain is Transcription antitermination protein NusB from Rickettsia bellii (strain OSU 85-389).